The following is a 249-amino-acid chain: Probable transcriptional regulatory protein Dtur_1615 (249 aa).

Belongs to the TACO1 family.

It is found in the cytoplasm. This is Probable transcriptional regulatory protein Dtur_1615 from Dictyoglomus turgidum (strain DSM 6724 / Z-1310).